Consider the following 715-residue polypeptide: Inducible lysine decarboxylase (715 aa).

N6-(pyridoxal phosphate)lysine is present on Lys-367.

The protein belongs to the Orn/Lys/Arg decarboxylase class-I family. As to quaternary structure, homodecamer. Interacts with RavA. The cofactor is pyridoxal 5'-phosphate.

The protein resides in the cytoplasm. It carries out the reaction L-lysine + H(+) = cadaverine + CO2. This chain is Inducible lysine decarboxylase (cadA), found in Escherichia coli O157:H7.